Consider the following 534-residue polypeptide: Cytochalasin cluster regulator ccsR (534 aa).

Residues 13-54 constitute a DNA-binding region (zn(2)-C6 fungal-type); it reads CDRCRRQKLRCVRPLKHGACEHPNNIEALEPCERCSRAGTPC. Disordered stretches follow at residues 88 to 170 and 350 to 378; these read IPKQ…LDAP and TSAR…SAAS. Over residues 109-125 the composition is skewed to polar residues; that stretch reads TGQNKGINDANAVTGSL. Over residues 130–146 the composition is skewed to basic and acidic residues; it reads PDHRSGSNVHRQPEARP. Residues 361-378 are compositionally biased toward low complexity; the sequence is DMCASSSNRDSSDLSAAS.

It is found in the nucleus. Transcription factor involved in regulation of gene cluster that mediates the biosynthesis of the mycotoxins cytochalasins E and K. This chain is Cytochalasin cluster regulator ccsR, found in Aspergillus clavatus (strain ATCC 1007 / CBS 513.65 / DSM 816 / NCTC 3887 / NRRL 1 / QM 1276 / 107).